The sequence spans 396 residues: Phosphoglycerate kinase (396 aa).

Substrate is bound by residues 21–23 (DFN), Arg36, 59–62 (HLGK), Arg119, and Arg156. ATP contacts are provided by residues Lys206, Gly294, Glu325, and 352 to 355 (GGDS).

The protein belongs to the phosphoglycerate kinase family. As to quaternary structure, monomer.

It is found in the cytoplasm. It catalyses the reaction (2R)-3-phosphoglycerate + ATP = (2R)-3-phospho-glyceroyl phosphate + ADP. Its pathway is carbohydrate degradation; glycolysis; pyruvate from D-glyceraldehyde 3-phosphate: step 2/5. In Listeria monocytogenes serotype 4b (strain CLIP80459), this protein is Phosphoglycerate kinase.